The following is a 237-amino-acid chain: Proteasome subunit alpha type-5 (237 aa).

It belongs to the peptidase T1A family. The 26S proteasome consists of a 20S proteasome core and two 19S regulatory subunits. The 20S proteasome core is composed of 28 subunits that are arranged in four stacked rings, resulting in a barrel-shaped structure. The two end rings are each formed by seven alpha subunits, and the two central rings are each formed by seven beta subunits. The catalytic chamber with the active sites is on the inside of the barrel.

It is found in the cytoplasm. Its subcellular location is the nucleus. Functionally, the proteasome is a multicatalytic proteinase complex which is characterized by its ability to cleave peptides with Arg, Phe, Tyr, Leu, and Glu adjacent to the leaving group at neutral or slightly basic pH. The proteasome has an ATP-dependent proteolytic activity. This is Proteasome subunit alpha type-5 (PAE1) from Oryza sativa subsp. japonica (Rice).